We begin with the raw amino-acid sequence, 240 residues long: Pyridoxine 5'-phosphate synthase (240 aa).

Asparagine 7 lines the 3-amino-2-oxopropyl phosphate pocket. A 1-deoxy-D-xylulose 5-phosphate-binding site is contributed by 9–10; the sequence is DH. Residue arginine 18 participates in 3-amino-2-oxopropyl phosphate binding. Histidine 43 serves as the catalytic Proton acceptor. 1-deoxy-D-xylulose 5-phosphate contacts are provided by arginine 45 and histidine 50. Residue glutamate 70 is the Proton acceptor of the active site. Threonine 100 contributes to the 1-deoxy-D-xylulose 5-phosphate binding site. Histidine 191 functions as the Proton donor in the catalytic mechanism. 3-amino-2-oxopropyl phosphate is bound by residues glycine 192 and 213-214; that span reads GH.

The protein belongs to the PNP synthase family. Homooctamer; tetramer of dimers.

Its subcellular location is the cytoplasm. It catalyses the reaction 3-amino-2-oxopropyl phosphate + 1-deoxy-D-xylulose 5-phosphate = pyridoxine 5'-phosphate + phosphate + 2 H2O + H(+). It functions in the pathway cofactor biosynthesis; pyridoxine 5'-phosphate biosynthesis; pyridoxine 5'-phosphate from D-erythrose 4-phosphate: step 5/5. Catalyzes the complicated ring closure reaction between the two acyclic compounds 1-deoxy-D-xylulose-5-phosphate (DXP) and 3-amino-2-oxopropyl phosphate (1-amino-acetone-3-phosphate or AAP) to form pyridoxine 5'-phosphate (PNP) and inorganic phosphate. The protein is Pyridoxine 5'-phosphate synthase of Microcystis aeruginosa (strain NIES-843 / IAM M-2473).